Consider the following 109-residue polypeptide: Flagellar hook-basal body complex protein FliE (109 aa).

This sequence belongs to the FliE family.

The protein localises to the bacterial flagellum basal body. This is Flagellar hook-basal body complex protein FliE from Pseudomonas aeruginosa (strain LESB58).